Consider the following 493-residue polypeptide: MSRNDWEVVIGLEVHAQLNTASKIFSAASTAFGAEPNVQASAVDIALPGVLPVLNGGAVERAIRFGVAIGATVAPKSVFARKNYFYPDLPKGYQISQFELPVVQGGAITIRVGDGDKAYEKTVQLTRAHLEEDAGKSLHEDFHGMSGIDLNRAGTPLLEIVSEPDMRSSAEAVAYARALHALVRWIDICDGNMQEGSFRCDANVSVRRPGGPLGTRREIKNLNSFRFLQQAIDFEVQWQIGTIEDGGRIQQATVLFDPDTGETRMMRSKEDAHDYRYFPDPDLLPLVIPSEWIARVRSEMPELPGAMKARFINDYGLSAYDAASLTAAKEIAAYYQAMLATADTKPGSQVPKLGANWVMGELAAQLNRAERDIGDSPVTPAQLAGLVQRIADGTISNNIARKVFAALWNGEGGSGADAADRIIEAQGLRQVNDSSALEPLIDEVLAANRKSVDEFRAGKEKAFNALVGQVMKASRGKANPAQVNEMLKRKLDA.

Belongs to the GatB/GatE family. GatB subfamily. Heterotrimer of A, B and C subunits.

The catalysed reaction is L-glutamyl-tRNA(Gln) + L-glutamine + ATP + H2O = L-glutaminyl-tRNA(Gln) + L-glutamate + ADP + phosphate + H(+). It carries out the reaction L-aspartyl-tRNA(Asn) + L-glutamine + ATP + H2O = L-asparaginyl-tRNA(Asn) + L-glutamate + ADP + phosphate + 2 H(+). Its function is as follows. Allows the formation of correctly charged Asn-tRNA(Asn) or Gln-tRNA(Gln) through the transamidation of misacylated Asp-tRNA(Asn) or Glu-tRNA(Gln) in organisms which lack either or both of asparaginyl-tRNA or glutaminyl-tRNA synthetases. The reaction takes place in the presence of glutamine and ATP through an activated phospho-Asp-tRNA(Asn) or phospho-Glu-tRNA(Gln). The chain is Aspartyl/glutamyl-tRNA(Asn/Gln) amidotransferase subunit B from Aromatoleum aromaticum (strain DSM 19018 / LMG 30748 / EbN1) (Azoarcus sp. (strain EbN1)).